Here is a 260-residue protein sequence, read N- to C-terminus: Triosephosphate isomerase (260 aa).

11-13 (NWK) provides a ligand contact to substrate. Catalysis depends on His-103, which acts as the Electrophile. Glu-175 functions as the Proton acceptor in the catalytic mechanism. Residues Gly-181, Ser-220, and 241-242 (GG) each bind substrate.

Belongs to the triosephosphate isomerase family. As to quaternary structure, homodimer.

The protein localises to the cytoplasm. The enzyme catalyses D-glyceraldehyde 3-phosphate = dihydroxyacetone phosphate. The protein operates within carbohydrate biosynthesis; gluconeogenesis. It participates in carbohydrate degradation; glycolysis; D-glyceraldehyde 3-phosphate from glycerone phosphate: step 1/1. In terms of biological role, involved in the gluconeogenesis. Catalyzes stereospecifically the conversion of dihydroxyacetone phosphate (DHAP) to D-glyceraldehyde-3-phosphate (G3P). The sequence is that of Triosephosphate isomerase from Shewanella halifaxensis (strain HAW-EB4).